A 427-amino-acid polypeptide reads, in one-letter code: Serine--tRNA ligase (427 aa).

229–231 (TAE) provides a ligand contact to L-serine. 260–262 (RSE) contributes to the ATP binding site. E283 is a binding site for L-serine. 347–350 (EISS) is an ATP binding site. S383 contributes to the L-serine binding site.

The protein belongs to the class-II aminoacyl-tRNA synthetase family. Type-1 seryl-tRNA synthetase subfamily. Homodimer. The tRNA molecule binds across the dimer.

The protein localises to the cytoplasm. It catalyses the reaction tRNA(Ser) + L-serine + ATP = L-seryl-tRNA(Ser) + AMP + diphosphate + H(+). It carries out the reaction tRNA(Sec) + L-serine + ATP = L-seryl-tRNA(Sec) + AMP + diphosphate + H(+). Its pathway is aminoacyl-tRNA biosynthesis; selenocysteinyl-tRNA(Sec) biosynthesis; L-seryl-tRNA(Sec) from L-serine and tRNA(Sec): step 1/1. In terms of biological role, catalyzes the attachment of serine to tRNA(Ser). Is also able to aminoacylate tRNA(Sec) with serine, to form the misacylated tRNA L-seryl-tRNA(Sec), which will be further converted into selenocysteinyl-tRNA(Sec). The polypeptide is Serine--tRNA ligase (Nitrosococcus oceani (strain ATCC 19707 / BCRC 17464 / JCM 30415 / NCIMB 11848 / C-107)).